The primary structure comprises 257 residues: Nickel import system ATP-binding protein NikD (257 aa).

The ABC transporter domain maps to 4-245 (IDIQNLTIKN…HLHPYTERLI (242 aa)). 37–44 (GESGAGKS) is an ATP binding site.

This sequence belongs to the ABC transporter superfamily. As to quaternary structure, the complex is composed of two ATP-binding proteins (NikD and NikE), two transmembrane proteins (NikB and NikC) and a solute-binding protein (NikA).

The protein localises to the cell membrane. The catalysed reaction is Ni(2+)(out) + ATP + H2O = Ni(2+)(in) + ADP + phosphate + H(+). In terms of biological role, part of the ABC transporter complex NikABCDE (Opp2) involved in nickel import. Probably responsible for energy coupling to the transport system. This is Nickel import system ATP-binding protein NikD from Staphylococcus aureus (strain MSSA476).